A 301-amino-acid chain; its full sequence is Probable alpha-L-glutamate ligase (301 aa).

Residues 104–287 (LQLLSRRGIG…VAGIIIEHIE (184 aa)) enclose the ATP-grasp domain. ATP contacts are provided by residues Lys141, 178-179 (EY), Asp187, and 211-213 (RSN). Residues Asp248, Glu260, and Asn262 each contribute to the Mg(2+) site. Mn(2+) is bound by residues Asp248, Glu260, and Asn262.

This sequence belongs to the RimK family. Requires Mg(2+) as cofactor. Mn(2+) serves as cofactor.

This chain is Probable alpha-L-glutamate ligase, found in Pseudomonas fluorescens (strain ATCC BAA-477 / NRRL B-23932 / Pf-5).